We begin with the raw amino-acid sequence, 334 residues long: Phenylalanine--tRNA ligase alpha subunit (334 aa).

Mg(2+) is bound at residue glutamate 249.

Belongs to the class-II aminoacyl-tRNA synthetase family. Phe-tRNA synthetase alpha subunit type 1 subfamily. Tetramer of two alpha and two beta subunits. Mg(2+) is required as a cofactor.

The protein localises to the cytoplasm. The catalysed reaction is tRNA(Phe) + L-phenylalanine + ATP = L-phenylalanyl-tRNA(Phe) + AMP + diphosphate + H(+). In Desulfosudis oleivorans (strain DSM 6200 / JCM 39069 / Hxd3) (Desulfococcus oleovorans), this protein is Phenylalanine--tRNA ligase alpha subunit.